Consider the following 65-residue polypeptide: Large ribosomal subunit protein bL35 (65 aa).

The protein belongs to the bacterial ribosomal protein bL35 family.

This is Large ribosomal subunit protein bL35 from Buchnera aphidicola subsp. Cinara cedri (strain Cc).